A 159-amino-acid polypeptide reads, in one-letter code: NAD(P)H-quinone oxidoreductase subunit N (159 aa).

Belongs to the complex I NdhN subunit family. In terms of assembly, NDH-1 can be composed of about 15 different subunits; different subcomplexes with different compositions have been identified which probably have different functions.

The protein localises to the cell inner membrane. The catalysed reaction is a plastoquinone + NADH + (n+1) H(+)(in) = a plastoquinol + NAD(+) + n H(+)(out). It catalyses the reaction a plastoquinone + NADPH + (n+1) H(+)(in) = a plastoquinol + NADP(+) + n H(+)(out). NDH-1 shuttles electrons from an unknown electron donor, via FMN and iron-sulfur (Fe-S) centers, to quinones in the respiratory and/or the photosynthetic chain. The immediate electron acceptor for the enzyme in this species is believed to be plastoquinone. Couples the redox reaction to proton translocation, and thus conserves the redox energy in a proton gradient. Cyanobacterial NDH-1 also plays a role in inorganic carbon-concentration. This Gloeobacter violaceus (strain ATCC 29082 / PCC 7421) protein is NAD(P)H-quinone oxidoreductase subunit N.